Reading from the N-terminus, the 430-residue chain is Long-chain specific acyl-CoA dehydrogenase, mitochondrial (430 aa).

The N-terminal 30 residues, 1 to 30, are a transit peptide targeting the mitochondrion; sequence MAARLLLRSLRVLKARSAPRPPPSARCSHS. The disordered stretch occupies residues 17–39; the sequence is SAPRPPPSARCSHSGAEARLETP. At Lys-42 the chain carries N6-acetyllysine. 2 positions are modified to phosphoserine: Ser-54 and Ser-55. N6-acetyllysine; alternate occurs at positions 66 and 81. An N6-succinyllysine; alternate mark is found at Lys-66 and Lys-81. N6-acetyllysine occurs at positions 92 and 95. Lys-165 is subject to N6-succinyllysine. 170–179 lines the FAD pocket; sequence IAMTEPGAGS. Ser-179 serves as a coordination point for substrate. Residue Ser-191 is modified to Phosphoserine. 203-205 contacts FAD; it reads FIT. 227 to 228 is a binding site for substrate; it reads AH. Lys-240 bears the N6-succinyllysine mark. N6-acetyllysine; alternate occurs at positions 254 and 279. Lys-254 and Lys-279 each carry N6-succinyllysine; alternate. Substrate is bound by residues Tyr-282 and 289 to 292; that span reads PQER. Glu-291 functions as the Proton acceptor in the catalytic mechanism. Arg-317 provides a ligand contact to FAD. Position 318 is an N6-acetyllysine (Lys-318). At Lys-322 the chain carries N6-acetyllysine; alternate. Lys-322 carries the N6-succinyllysine; alternate modification. Gln-328 is an FAD binding site. Lys-358 is subject to N6-acetyllysine. Ser-362 bears the Phosphoserine mark. An FAD-binding site is contributed by 385 to 389; the sequence is QLHGG. A substrate-binding site is contributed by 412–413; sequence GG. Residue 414-416 coordinates FAD; it reads TNE.

It belongs to the acyl-CoA dehydrogenase family. In terms of assembly, homotetramer. It depends on FAD as a cofactor. Acetylation at Lys-318 and Lys-322 in proximity of the cofactor-binding sites strongly reduces catalytic activity. These sites are deacetylated by SIRT3. As to expression, expressed in heart, skeletal muscle, kidney, and brain. Expressed in liver (at protein level).

Its subcellular location is the mitochondrion matrix. The catalysed reaction is a long-chain 2,3-saturated fatty acyl-CoA + oxidized [electron-transfer flavoprotein] + H(+) = a long-chain (2E)-enoyl-CoA + reduced [electron-transfer flavoprotein]. It catalyses the reaction oxidized [electron-transfer flavoprotein] + hexadecanoyl-CoA + H(+) = (2E)-hexadecenoyl-CoA + reduced [electron-transfer flavoprotein]. It carries out the reaction hexanoyl-CoA + oxidized [electron-transfer flavoprotein] + H(+) = (2E)-hexenoyl-CoA + reduced [electron-transfer flavoprotein]. The enzyme catalyses octanoyl-CoA + oxidized [electron-transfer flavoprotein] + H(+) = (2E)-octenoyl-CoA + reduced [electron-transfer flavoprotein]. The catalysed reaction is decanoyl-CoA + oxidized [electron-transfer flavoprotein] + H(+) = (2E)-decenoyl-CoA + reduced [electron-transfer flavoprotein]. It catalyses the reaction dodecanoyl-CoA + oxidized [electron-transfer flavoprotein] + H(+) = (2E)-dodecenoyl-CoA + reduced [electron-transfer flavoprotein]. It carries out the reaction tetradecanoyl-CoA + oxidized [electron-transfer flavoprotein] + H(+) = (2E)-tetradecenoyl-CoA + reduced [electron-transfer flavoprotein]. The enzyme catalyses octadecanoyl-CoA + oxidized [electron-transfer flavoprotein] + H(+) = (2E)-octadecenoyl-CoA + reduced [electron-transfer flavoprotein]. The catalysed reaction is eicosanoyl-CoA + oxidized [electron-transfer flavoprotein] + H(+) = (2E)-eicosenoyl-CoA + reduced [electron-transfer flavoprotein]. It catalyses the reaction docosanoyl-CoA + oxidized [electron-transfer flavoprotein] + H(+) = (2E)-docosenoyl-CoA + reduced [electron-transfer flavoprotein]. It carries out the reaction tetracosanoyl-CoA + oxidized [electron-transfer flavoprotein] + H(+) = (2E)-tetracosenoyl-CoA + reduced [electron-transfer flavoprotein]. The enzyme catalyses (5E)-tetradecenoyl-CoA + oxidized [electron-transfer flavoprotein] + H(+) = (2E,5E)-tetradecadienoyl-CoA + reduced [electron-transfer flavoprotein]. The catalysed reaction is (5Z)-tetradecenoyl-CoA + oxidized [electron-transfer flavoprotein] + H(+) = (2E,5Z)-tetradecadienoyl-CoA + reduced [electron-transfer flavoprotein]. It catalyses the reaction oxidized [electron-transfer flavoprotein] + (9Z)-octadecenoyl-CoA + H(+) = (2E,9Z)-octadecadienoyl-CoA + reduced [electron-transfer flavoprotein]. It functions in the pathway lipid metabolism; mitochondrial fatty acid beta-oxidation. Functionally, long-chain specific acyl-CoA dehydrogenase is one of the acyl-CoA dehydrogenases that catalyze the first step of mitochondrial fatty acid beta-oxidation, an aerobic process breaking down fatty acids into acetyl-CoA and allowing the production of energy from fats. The first step of fatty acid beta-oxidation consists in the removal of one hydrogen from C-2 and C-3 of the straight-chain fatty acyl-CoA thioester, resulting in the formation of trans-2-enoyl-CoA. Among the different mitochondrial acyl-CoA dehydrogenases, long-chain specific acyl-CoA dehydrogenase can act on saturated and unsaturated acyl-CoAs with 6 to 24 carbons with a preference for 8 to 18 carbons long primary chains. The chain is Long-chain specific acyl-CoA dehydrogenase, mitochondrial from Mus musculus (Mouse).